A 350-amino-acid polypeptide reads, in one-letter code: Glycerol-3-phosphate dehydrogenase [NAD(+)], cytoplasmic (350 aa).

NAD(+) contacts are provided by residues 11-16, Phe-98, Lys-121, and Ala-155; that span reads GSGNWG. Lys-121 is a substrate binding site. Residue Lys-206 is the Proton acceptor of the active site. Residues Arg-270 and Gln-299 each coordinate NAD(+). Position 270-271 (270-271) interacts with substrate; the sequence is RN.

Belongs to the NAD-dependent glycerol-3-phosphate dehydrogenase family. Homodimer.

It is found in the cytoplasm. The catalysed reaction is sn-glycerol 3-phosphate + NAD(+) = dihydroxyacetone phosphate + NADH + H(+). Its pathway is phospholipid metabolism; alpha-glycerophosphate cycle. The polypeptide is Glycerol-3-phosphate dehydrogenase [NAD(+)], cytoplasmic (Gpdh1) (Drosophila ezoana (Fruit fly)).